Consider the following 353-residue polypeptide: Protein MGF 360-10L (353 aa).

The ANK repeat unit spans residues 57–89 (DLNTALMLATKENNYQLIKLFTEWGADINYGLI). The N-linked (GlcNAc...) asparagine; by host glycan is linked to N172. Transmembrane regions (helical) follow at residues 206 to 228 (LNTWWLICALCFNKLFDLHNLYE) and 249 to 271 (NFLTIYYCFILGANINLAMIASI). A glycan (N-linked (GlcNAc...) asparagine; by host) is linked at N342.

This sequence belongs to the asfivirus MGF 360 family.

The protein localises to the host membrane. Plays a role in virus cell tropism, and may be required for efficient virus replication in macrophages. This African swine fever virus (isolate Warthog/Namibia/Wart80/1980) (ASFV) protein is Protein MGF 360-10L.